Consider the following 183-residue polypeptide: Ribosome-recycling factor (183 aa).

This sequence belongs to the RRF family.

The protein resides in the cytoplasm. In terms of biological role, responsible for the release of ribosomes from messenger RNA at the termination of protein biosynthesis. May increase the efficiency of translation by recycling ribosomes from one round of translation to another. The chain is Ribosome-recycling factor from Ureaplasma parvum serovar 3 (strain ATCC 27815 / 27 / NCTC 11736).